The primary structure comprises 339 residues: Phenylalanine--tRNA ligase alpha subunit (339 aa).

A Mg(2+)-binding site is contributed by Glu-250.

The protein belongs to the class-II aminoacyl-tRNA synthetase family. Phe-tRNA synthetase alpha subunit type 1 subfamily. As to quaternary structure, tetramer of two alpha and two beta subunits. Requires Mg(2+) as cofactor.

The protein resides in the cytoplasm. It carries out the reaction tRNA(Phe) + L-phenylalanine + ATP = L-phenylalanyl-tRNA(Phe) + AMP + diphosphate + H(+). The chain is Phenylalanine--tRNA ligase alpha subunit from Flavobacterium johnsoniae (strain ATCC 17061 / DSM 2064 / JCM 8514 / BCRC 14874 / CCUG 350202 / NBRC 14942 / NCIMB 11054 / UW101) (Cytophaga johnsonae).